A 410-amino-acid polypeptide reads, in one-letter code: Gamma-glutamyl phosphate reductase (410 aa).

The protein belongs to the gamma-glutamyl phosphate reductase family.

The protein localises to the cytoplasm. The catalysed reaction is L-glutamate 5-semialdehyde + phosphate + NADP(+) = L-glutamyl 5-phosphate + NADPH + H(+). Its pathway is amino-acid biosynthesis; L-proline biosynthesis; L-glutamate 5-semialdehyde from L-glutamate: step 2/2. Catalyzes the NADPH-dependent reduction of L-glutamate 5-phosphate into L-glutamate 5-semialdehyde and phosphate. The product spontaneously undergoes cyclization to form 1-pyrroline-5-carboxylate. In Sulfurovum sp. (strain NBC37-1), this protein is Gamma-glutamyl phosphate reductase.